Here is a 284-residue protein sequence, read N- to C-terminus: tRNA dimethylallyltransferase (284 aa).

6–13 is a binding site for ATP; that stretch reads GPTASGKS. A substrate-binding site is contributed by 8–13; the sequence is TASGKS. The interaction with substrate tRNA stretch occupies residues 31–34; sequence DSLS.

The protein belongs to the IPP transferase family. As to quaternary structure, monomer. Mg(2+) is required as a cofactor.

The catalysed reaction is adenosine(37) in tRNA + dimethylallyl diphosphate = N(6)-dimethylallyladenosine(37) in tRNA + diphosphate. In terms of biological role, catalyzes the transfer of a dimethylallyl group onto the adenine at position 37 in tRNAs that read codons beginning with uridine, leading to the formation of N6-(dimethylallyl)adenosine (i(6)A). In Nautilia profundicola (strain ATCC BAA-1463 / DSM 18972 / AmH), this protein is tRNA dimethylallyltransferase.